Here is a 282-residue protein sequence, read N- to C-terminus: Bifunctional protein FolD (282 aa).

NADP(+)-binding positions include 164-166 (GRS) and S189.

This sequence belongs to the tetrahydrofolate dehydrogenase/cyclohydrolase family. In terms of assembly, homodimer.

It catalyses the reaction (6R)-5,10-methylene-5,6,7,8-tetrahydrofolate + NADP(+) = (6R)-5,10-methenyltetrahydrofolate + NADPH. The enzyme catalyses (6R)-5,10-methenyltetrahydrofolate + H2O = (6R)-10-formyltetrahydrofolate + H(+). Its pathway is one-carbon metabolism; tetrahydrofolate interconversion. Its function is as follows. Catalyzes the oxidation of 5,10-methylenetetrahydrofolate to 5,10-methenyltetrahydrofolate and then the hydrolysis of 5,10-methenyltetrahydrofolate to 10-formyltetrahydrofolate. The chain is Bifunctional protein FolD from Lachnoclostridium phytofermentans (strain ATCC 700394 / DSM 18823 / ISDg) (Clostridium phytofermentans).